The following is a 758-amino-acid chain: Solute carrier family 26 member 6 (758 aa).

Residues 1 to 117 (MGLPDGSDQG…PQGLAYALLA (117 aa)) lie on the Cytoplasmic side of the membrane. The helical transmembrane segment at 118 to 138 (GLPPMFGLYSSFYPVFIYFLF) threads the bilayer. At 139–187 (GTSRHISVGTFAVMSVMVGSVTESLTADKAFVQGLNATADDARVQVAYT) the chain is on the extracellular side. Residue asparagine 174 is glycosylated (N-linked (GlcNAc) asparagine). Residues 188–208 (LSFLVGLFQVGLGLVHFGFVV) traverse the membrane as a helical segment. At 209–263 (TYLSEPLVRSYTTAASVQVLVSQLKYVFGIKLSSHSGPLSVIYTVLEVCAQLPET) the chain is on the cytoplasmic side. The chain crosses the membrane as a helical span at residues 264-284 (VPGTVVTAIVAGVALVLVKLL). Residues 285 to 292 (NEKLHRRL) are Extracellular-facing. A helical transmembrane segment spans residues 293–313 (PLPIPGELLTLIGATGISYGV). Over 314–340 (KLNDRFKVDVVGNITTGLIPPVAPKTE) the chain is Cytoplasmic. Residues 341–361 (LFATLVGNAFAIAVVGFAIAI) form a helical membrane-spanning segment. The Extracellular segment spans residues 362–380 (SLGKIFALRHGYRVDSNQE). The chain crosses the membrane as a helical span at residues 381–401 (LVALGLSNLIGGFFQCFPVSC). The Cytoplasmic portion of the chain corresponds to 402 to 417 (SMSRSLVQESTGGNTQ). A helical transmembrane segment spans residues 418–438 (VAGAVSSLFILLIIVKLGELF). Residues 439–485 (RDLPKAVLAAVIIVNLKGMMKQFSDICSLWKANRVDLLIWLVTFVAT) are Extracellular-facing. The chain crosses the membrane as a helical span at residues 486-506 (ILLNLDIGLAVSIVFSLLLVV). The Cytoplasmic segment spans residues 507-758 (VRMQLPHYSV…PKSPVLATKL (252 aa)). Positions 531-741 (EYSGAKEVPG…ASVHDAVTFA (211 aa)) constitute an STAS domain. A disordered region spans residues 585 to 608 (EMKLKRMKKAKKSQKQDASSKISS). Serine 751 carries the post-translational modification Phosphoserine.

Interacts (via C-terminal domain) with PDZK1 (via C-terminal PDZ domain); the interaction induces chloride and oxalate exchange transport. Interacts with CFTR, SLC26A3 and NHERF1. Interacts with AHCYL1; the interaction increases SLC26A6 activity. Post-translationally, N-glycosylated. Glycosylation at Asn-174 positively regulates its chloride oxalate exchanger activity. Expressed in kidney (at protein level). Expressed in spermatogenic cells. Expressed in intestine, kidney, testis, brain, muscle, heart, and stomach. Expressed in the submandibular and sublingual salivary glands. As to expression, highly expressed in stomach, kidney, heart and small intestine, low in the lung, liver, testis, brain, skeletal muscle and colon. In terms of tissue distribution, expressed in the heart.

It localises to the cell membrane. Its subcellular location is the apical cell membrane. It is found in the cytoplasmic vesicle membrane. The protein localises to the microsome. The enzyme catalyses 2 hydrogencarbonate(in) + chloride(out) = 2 hydrogencarbonate(out) + chloride(in). It carries out the reaction oxalate(in) + chloride(out) = oxalate(out) + chloride(in). The catalysed reaction is oxalate(in) + formate(out) = oxalate(out) + formate(in). It catalyses the reaction oxalate(in) + sulfate(out) = oxalate(out) + sulfate(in). The enzyme catalyses formate(in) + chloride(out) = formate(out) + chloride(in). It carries out the reaction sulfate(in) = sulfate(out). Apical membrane chloride-bicarbonate exchange activity of the pancreatic duct is inhibited by 4,4'-diisothiocyanatostilbene-2,2'-disulfonic acid (DIDS). Oxalate secretion in the duodenum and chloride-formate exchange activity is inhibited by DIDS. With respect to regulation, chloride-formate exchange activity and transcellular sulfate absorption is inhibited by 4,4'-diisothiocyanatostilbene-2,2'-disulfonic acid (DIDS). Its function is as follows. Apical membrane anion-exchanger with wide epithelial distribution that plays a role as a component of the pH buffering system for maintaining acid-base homeostasis. Acts as a versatile DIDS-sensitive inorganic and organic anion transporter that mediates the uptake of monovalent anions like chloride, bicarbonate, formate and hydroxyl ion and divalent anions like sulfate and oxalate. Functions in multiple exchange modes involving pairs of these anions, which include chloride-bicarbonate, chloride-oxalate, oxalate-formate, oxalate-sulfate and chloride-formate exchange. Apical membrane chloride-bicarbonate exchanger that mediates luminal chloride absorption and bicarbonate secretion by the small intestinal brush border membrane and contributes to intracellular pH regulation in the duodenal upper villous epithelium during proton-coupled peptide absorption, possibly by providing a bicarbonate import pathway. Its association with carbonic anhydrase CA2 forms a bicarbonate transport metabolon; hence maximizes the local concentration of bicarbonate at the transporter site. Also mediates intestinal chloride absorption and oxalate secretion, thereby preventing hyperoxaluria and calcium oxalate urolithiasis. Transepithelial oxalate secretion, chloride-formate, chloride-oxalate and chloride-bicarbonate transport activities in the duodenum are inhibited by PKC activation in a calcium-independent manner. The apical membrane chloride-bicarbonate exchanger also provides a major route for fluid and bicarbonate secretion into the proximal tubules of the kidney as well as into the proximal part of the interlobular pancreatic ductal tree, where it mediates electrogenic chloride-bicarbonate exchange with a chloride-bicarbonate stoichiometry of 1:2, and hence will dilute and alkalinize protein-rich acinar secretion. Also mediates the transcellular sulfate absorption and oxalate secretion across the apical membrane in the duodenum and the formate ion efflux at the apical brush border of cells in the proximal tubules of kidney. Plays a role in sperm capacitation by increasing intracellular pH. In terms of biological role, mediates electrogenic chloride-bicarbonate exchange with a chloride-bicarbonate stoichiometry of 1:2. Also mediates exchange of chloride-formate and chloride-oxalate ions. Mediates transcellular sulfate absorption. The polypeptide is Solute carrier family 26 member 6 (Mus musculus (Mouse)).